Consider the following 403-residue polypeptide: Betaine--homocysteine S-methyltransferase 1 (403 aa).

In terms of domain architecture, Hcy-binding spans lysine 8–leucine 311. Residues cysteine 214, cysteine 296, and cysteine 297 each contribute to the Zn(2+) site.

As to quaternary structure, homotetramer. It depends on Zn(2+) as a cofactor.

Its subcellular location is the cytoplasm. The enzyme catalyses L-homocysteine + glycine betaine = N,N-dimethylglycine + L-methionine. The protein operates within amine and polyamine degradation; betaine degradation; sarcosine from betaine: step 1/2. Its pathway is amino-acid biosynthesis; L-methionine biosynthesis via de novo pathway; L-methionine from L-homocysteine (BhmT route): step 1/1. Functionally, involved in the regulation of homocysteine metabolism. Converts betaine and homocysteine to dimethylglycine and methionine, respectively. This reaction is also required for the irreversible oxidation of choline. This Xenopus tropicalis (Western clawed frog) protein is Betaine--homocysteine S-methyltransferase 1 (bhmt).